The sequence spans 165 residues: MSTVFNGDETAPFFGFLGAAAALVFSCMGAAYGTAKSGVGVASMGVMRPELVMKSIVPVVMAGVLGIYGLIIAVIISTGINPKAKSYYLFDGYAHLSSGLACGLAGLSAGMAIGIVGDAGVRANAQQPKLFVGMILILIFAEALALYGLIVGIILSSRAGQSRAD.

The Lumenal segment spans residues M1–P12. The helical transmembrane segment at F13–G33 threads the bilayer. At T34–S55 the chain is on the cytoplasmic side. The helical transmembrane segment at I56 to I76 threads the bilayer. Topologically, residues S77–H95 are lumenal. Residues L96 to G117 form a helical membrane-spanning segment. Residues D118–K129 lie on the Cytoplasmic side of the membrane. Residues L130 to L155 form a helical membrane-spanning segment. The Lumenal portion of the chain corresponds to S156–D165.

Belongs to the V-ATPase proteolipid subunit family. As to quaternary structure, V-ATPase is a heteromultimeric enzyme composed of a peripheral catalytic V1 complex (main components: subunits A, B, C, D, E, and F) attached to an integral membrane V0 proton pore complex (main component: the proteolipid protein; which is present as a hexamer that forms the proton-conducting pore).

It is found in the vacuole membrane. Proton-conducting pore forming subunit of the membrane integral V0 complex of vacuolar ATPase. V-ATPase is responsible for acidifying a variety of intracellular compartments in eukaryotic cells. The chain is V-type proton ATPase 16 kDa proteolipid subunit (VMAC1) from Mesembryanthemum crystallinum (Common ice plant).